A 44-amino-acid chain; its full sequence is Thymosin beta-12 (44 aa).

Basic and acidic residues-rich tracts occupy residues 1-25 and 33-44; these read MSDK…ETQE and ETIEQEKAAATS. The interval 1–44 is disordered; the sequence is MSDKPDISEVTSFDKTKLKKTETQEKNPLPSKETIEQEKAAATS. Ser2 carries the post-translational modification N-acetylserine.

This sequence belongs to the thymosin beta family.

It localises to the cytoplasm. It is found in the cytoskeleton. Functionally, plays an important role in the organization of the cytoskeleton. Binds to and sequesters actin monomers (G actin) and therefore inhibits actin polymerization. This chain is Thymosin beta-12, found in Lateolabrax japonicus (Japanese sea perch).